The following is a 304-amino-acid chain: Tritrans,polycis-undecaprenyl-diphosphate synthase (geranylgeranyl-diphosphate specific) (304 aa).

Residue Asp-33 is part of the active site. Asp-33 provides a ligand contact to Mg(2+). Substrate-binding positions include 34–37 (GNRR), Lys-46, His-50, and 78–80 (STE). Asn-81 (proton acceptor) is an active-site residue. Substrate is bound by residues Phe-82, Arg-84, Arg-203, and 209–211 (RTS).

The protein belongs to the UPP synthase family. As to quaternary structure, homodimer. It depends on Mg(2+) as a cofactor.

The enzyme catalyses geranylgeranyl diphosphate + 7 isopentenyl diphosphate = tri-trans,hepta-cis-undecaprenyl diphosphate + 7 diphosphate. Functionally, catalyzes the sequential condensation of isopentenyl diphosphate (IPP) with geranylgeranyl diphosphate (GGPP) to yield (2Z,6Z,10Z,14Z,18Z,22Z,26Z,30E,34E,38E)-undecaprenyl diphosphate (tritrans,heptacis-UPP). It is probably the precursor of glycosyl carrier lipids. The sequence is that of Tritrans,polycis-undecaprenyl-diphosphate synthase (geranylgeranyl-diphosphate specific) from Haloarcula marismortui (strain ATCC 43049 / DSM 3752 / JCM 8966 / VKM B-1809) (Halobacterium marismortui).